We begin with the raw amino-acid sequence, 108 residues long: Peptidyl-prolyl cis-trans isomerase FKBP1B (108 aa).

Positions 20–108 (GQTCVVHYTG…IFDVELLNLE (89 aa)) constitute a PPIase FKBP-type domain.

Identified in a complex composed of RYR2, FKBP1B, PKA catalytic subunit, PRKAR2A, AKAP6, and the protein phosphatases PP2A and PP1. Interacts directly with RYR2.

It is found in the cytoplasm. The protein localises to the sarcoplasmic reticulum. The catalysed reaction is [protein]-peptidylproline (omega=180) = [protein]-peptidylproline (omega=0). Inhibited by both FK506 and rapamycin. Has the potential to contribute to the immunosuppressive and toxic effects of FK506 and rapamycin. PPIases accelerate the folding of proteins. It catalyzes the cis-trans isomerization of proline imidic peptide bonds in oligopeptides. The protein is Peptidyl-prolyl cis-trans isomerase FKBP1B (FKBP1B) of Bos taurus (Bovine).